A 215-amino-acid polypeptide reads, in one-letter code: N-(5'-phosphoribosyl)anthranilate isomerase (215 aa).

This sequence belongs to the TrpF family.

It catalyses the reaction N-(5-phospho-beta-D-ribosyl)anthranilate = 1-(2-carboxyphenylamino)-1-deoxy-D-ribulose 5-phosphate. Its pathway is amino-acid biosynthesis; L-tryptophan biosynthesis; L-tryptophan from chorismate: step 3/5. In Rippkaea orientalis (strain PCC 8801 / RF-1) (Cyanothece sp. (strain PCC 8801)), this protein is N-(5'-phosphoribosyl)anthranilate isomerase.